A 909-amino-acid polypeptide reads, in one-letter code: Disintegrin and metalloproteinase domain-containing protein 12 (909 aa).

Positions 1 to 28 are cleaved as a signal peptide; sequence MAARPLPVSPARALLLALAGALLAPCEA. Residues 29 to 207 constitute a propeptide that is removed on maturation; sequence RGVSLWNQGR…SQTWARRHKR (179 aa). 2 N-linked (GlcNAc...) asparagine glycosylation sites follow: N111 and N149. The Cysteine switch motif lies at 177–184; that stretch reads GSCGSHHN. Zn(2+) is bound by residues C179 and H350. The Extracellular portion of the chain corresponds to 208-708; it reads ETLKATKYVE…GPIRQADNQG (501 aa). The Peptidase M12B domain maps to 214–416; sequence KYVELVIVAD…GMGVCLFNLP (203 aa). Intrachain disulfides connect C325–C411, C367–C395, and C369–C378. Residue E351 is part of the active site. Residues H354 and H360 each contribute to the Zn(2+) site. N-linked (GlcNAc...) asparagine glycosylation is found at N381 and N452. The region spanning 424–510 is the Disintegrin domain; that stretch reads GQKCGNRFVE…HCPANVYLHD (87 aa). A disulfide bridge connects residues C482 and C502. Residue N651 is glycosylated (N-linked (GlcNAc...) asparagine). Positions 656 to 688 constitute an EGF-like domain; sequence GVHECAMQCHGRGVCNNRKNCHCEAHWAPPFCD. Cystine bridges form between C660/C670, C664/C676, and C678/C687. A helical transmembrane segment spans residues 709-729; that stretch reads LTIGILVTILCLLAAGFVVYL. At 730–909 the chain is on the cytoplasmic side; sequence KRKTLIRLLF…PRSTHTAYIK (180 aa). Positions 822–862 are disordered; the sequence is LHRAPRAPSVPARPLPAKPALRQAQGTCKPNPPQKPLPADP. Residues 828 to 834 carry the SH3-binding; class II motif; sequence APSVPAR. The SH3-binding; class I motif lies at 834–841; sequence RPLPAKPA. Positions 851 to 860 are enriched in pro residues; the sequence is PNPPQKPLPA. The short motif at 885–891 is the SH3-binding; class I element; the sequence is RLAPLRP. Phosphotyrosine; by SRC is present on Y907.

In terms of assembly, interacts with alpha-actinin-2 and with syndecans. Interacts with SH3PXD2A. Interacts with FST3. Interacts with RACK1; the interaction is required for PKC-dependent translocation of ADAM12 to the cell membrane. Zn(2+) serves as cofactor. Post-translationally, the precursor is cleaved by a furin endopeptidase. Isoform 1 is expressed in placenta and skeletal, cardiac, and smooth muscle. Isoform 2 seems to be expressed only in placenta or in embryo and fetus. Both forms were expressed in some tumor cells lines. Not detected in brain, lung, liver, kidney or pancreas.

Its subcellular location is the cell membrane. It localises to the secreted. Functionally, involved in skeletal muscle regeneration, specifically at the onset of cell fusion. Also involved in macrophage-derived giant cells (MGC) and osteoclast formation from mononuclear precursors. In Homo sapiens (Human), this protein is Disintegrin and metalloproteinase domain-containing protein 12 (ADAM12).